Reading from the N-terminus, the 58-residue chain is MSKVVVRKNESLDDALRRFKRSVTKAGTLQEARKREHYEKPSVKRKRKSEAARKRKKI.

The disordered stretch occupies residues K25 to I58. The segment covering E31–S42 has biased composition (basic and acidic residues). A compositionally biased stretch (basic residues) spans V43–I58.

The protein belongs to the bacterial ribosomal protein bS21 family.

The polypeptide is Small ribosomal subunit protein bS21 (Streptococcus thermophilus (strain ATCC BAA-491 / LMD-9)).